A 148-amino-acid chain; its full sequence is MAGRKGGERKKAVTRSVKAGLQFPVGRIGRYLKKGRYAQAVGSGAPVYLAAVLEYLAAEVLELAGNAAKDNKKTRIIPRHLLLAVRNDQELGRLLAGVTIAHGGVIPNINSVLLPKKAAGAAEKESTKSPKKKAATKSPKKKTAATKE.

A disordered region spans residues 120 to 148; sequence GAAEKESTKSPKKKAATKSPKKKTAATKE. Short sequence motifs (SPKK motif) lie at residues 129–132 and 138–141; these read SPKK. Residues 129–148 are compositionally biased toward basic residues; that stretch reads SPKKKAATKSPKKKTAATKE.

This sequence belongs to the histone H2A family. The nucleosome is a histone octamer containing two molecules each of H2A, H2B, H3 and H4 assembled in one H3-H4 heterotetramer and two H2A-H2B heterodimers. The octamer wraps approximately 147 bp of DNA. In terms of tissue distribution, abundant in meristematic tissues.

It is found in the nucleus. It localises to the chromosome. Functionally, core component of nucleosome. Nucleosomes wrap and compact DNA into chromatin, limiting DNA accessibility to the cellular machineries which require DNA as a template. Histones thereby play a central role in transcription regulation, DNA repair, DNA replication and chromosomal stability. DNA accessibility is regulated via a complex set of post-translational modifications of histones, also called histone code, and nucleosome remodeling. This is Protein H2A.6 (H2A-3) from Triticum aestivum (Wheat).